We begin with the raw amino-acid sequence, 81 residues long: Small ribosomal subunit protein bS16 (81 aa).

This sequence belongs to the bacterial ribosomal protein bS16 family.

The protein is Small ribosomal subunit protein bS16 of Neisseria meningitidis serogroup C (strain 053442).